The sequence spans 211 residues: 3-demethoxyubiquinol 3-hydroxylase (211 aa).

Residues glutamate 60, glutamate 90, histidine 93, glutamate 142, glutamate 174, and histidine 177 each contribute to the Fe cation site.

The protein belongs to the COQ7 family. It depends on Fe cation as a cofactor.

It is found in the cell membrane. It carries out the reaction a 5-methoxy-2-methyl-3-(all-trans-polyprenyl)benzene-1,4-diol + AH2 + O2 = a 3-demethylubiquinol + A + H2O. It functions in the pathway cofactor biosynthesis; ubiquinone biosynthesis. Its function is as follows. Catalyzes the hydroxylation of 2-nonaprenyl-3-methyl-6-methoxy-1,4-benzoquinol during ubiquinone biosynthesis. The polypeptide is 3-demethoxyubiquinol 3-hydroxylase (Acinetobacter baylyi (strain ATCC 33305 / BD413 / ADP1)).